A 241-amino-acid polypeptide reads, in one-letter code: Biosynthetic peptidoglycan transglycosylase (241 aa).

A helical membrane pass occupies residues 18-38 (GVIGIIALWMAGILIFAFLPV).

The protein belongs to the glycosyltransferase 51 family.

It localises to the cell inner membrane. It catalyses the reaction [GlcNAc-(1-&gt;4)-Mur2Ac(oyl-L-Ala-gamma-D-Glu-L-Lys-D-Ala-D-Ala)](n)-di-trans,octa-cis-undecaprenyl diphosphate + beta-D-GlcNAc-(1-&gt;4)-Mur2Ac(oyl-L-Ala-gamma-D-Glu-L-Lys-D-Ala-D-Ala)-di-trans,octa-cis-undecaprenyl diphosphate = [GlcNAc-(1-&gt;4)-Mur2Ac(oyl-L-Ala-gamma-D-Glu-L-Lys-D-Ala-D-Ala)](n+1)-di-trans,octa-cis-undecaprenyl diphosphate + di-trans,octa-cis-undecaprenyl diphosphate + H(+). It functions in the pathway cell wall biogenesis; peptidoglycan biosynthesis. Peptidoglycan polymerase that catalyzes glycan chain elongation from lipid-linked precursors. The protein is Biosynthetic peptidoglycan transglycosylase of Yersinia pseudotuberculosis serotype IB (strain PB1/+).